The sequence spans 208 residues: Ribosomal RNA large subunit methyltransferase E (208 aa).

Residues Gly-62, Trp-64, Asp-82, Asp-98, and Asp-123 each contribute to the S-adenosyl-L-methionine site. Lys-163 acts as the Proton acceptor in catalysis.

It belongs to the class I-like SAM-binding methyltransferase superfamily. RNA methyltransferase RlmE family.

Its subcellular location is the cytoplasm. The enzyme catalyses uridine(2552) in 23S rRNA + S-adenosyl-L-methionine = 2'-O-methyluridine(2552) in 23S rRNA + S-adenosyl-L-homocysteine + H(+). In terms of biological role, specifically methylates the uridine in position 2552 of 23S rRNA at the 2'-O position of the ribose in the fully assembled 50S ribosomal subunit. The chain is Ribosomal RNA large subunit methyltransferase E from Idiomarina loihiensis (strain ATCC BAA-735 / DSM 15497 / L2-TR).